The chain runs to 88 residues: uncharacterized protein (88 aa).

This is an uncharacterized protein from Sinorhizobium fredii (strain NBRC 101917 / NGR234).